Here is a 183-residue protein sequence, read N- to C-terminus: Holliday junction branch migration complex subunit RuvA (183 aa).

Positions Met1–Leu63 are domain I. Positions Glu64–Asn141 are domain II. Residue Asn141 is a region of interest, flexible linker. The interval Asn141 to Ser183 is domain III.

Belongs to the RuvA family. As to quaternary structure, homotetramer. Forms an RuvA(8)-RuvB(12)-Holliday junction (HJ) complex. HJ DNA is sandwiched between 2 RuvA tetramers; dsDNA enters through RuvA and exits via RuvB. An RuvB hexamer assembles on each DNA strand where it exits the tetramer. Each RuvB hexamer is contacted by two RuvA subunits (via domain III) on 2 adjacent RuvB subunits; this complex drives branch migration. In the full resolvosome a probable DNA-RuvA(4)-RuvB(12)-RuvC(2) complex forms which resolves the HJ.

The protein resides in the cytoplasm. The RuvA-RuvB-RuvC complex processes Holliday junction (HJ) DNA during genetic recombination and DNA repair, while the RuvA-RuvB complex plays an important role in the rescue of blocked DNA replication forks via replication fork reversal (RFR). RuvA specifically binds to HJ cruciform DNA, conferring on it an open structure. The RuvB hexamer acts as an ATP-dependent pump, pulling dsDNA into and through the RuvAB complex. HJ branch migration allows RuvC to scan DNA until it finds its consensus sequence, where it cleaves and resolves the cruciform DNA. This Helicobacter acinonychis (strain Sheeba) protein is Holliday junction branch migration complex subunit RuvA.